The following is a 187-amino-acid chain: MTTTEKIQPRLKVRYREEIKDALAKEFNYANVMQIPGVVKVVVNMGVGDAARDAKLINGAVEDLALITGQKPQIRKATKSIAQFKLREGMPIGAKVTLRGDRMWEFLDRLVSIALPRIRDFRGLSPKQFDGNGNYTFGLSEQSMFHEIDVDKIDRPRGMDITVVTTATNNEEGRALLKHLGFPFKEN.

It belongs to the universal ribosomal protein uL5 family. In terms of assembly, part of the 50S ribosomal subunit; part of the 5S rRNA/L5/L18/L25 subcomplex. Contacts the 5S rRNA and the P site tRNA. Forms a bridge to the 30S subunit in the 70S ribosome.

In terms of biological role, this is one of the proteins that bind and probably mediate the attachment of the 5S RNA into the large ribosomal subunit, where it forms part of the central protuberance. In the 70S ribosome it contacts protein S13 of the 30S subunit (bridge B1b), connecting the 2 subunits; this bridge is implicated in subunit movement. Contacts the P site tRNA; the 5S rRNA and some of its associated proteins might help stabilize positioning of ribosome-bound tRNAs. The sequence is that of Large ribosomal subunit protein uL5 from Nocardia farcinica (strain IFM 10152).